The chain runs to 302 residues: Ubiquitin thioesterase OTU1 (302 aa).

Residues 5-83 (RCKARSGTQP…IVEEDTSKPS (79 aa)) form a UBX-like region. The 126-residue stretch at 103–228 (LARRVVPADN…GIHYDPLERK (126 aa)) folds into the OTU domain. A cys-loop region spans residues 108–114 (VPADNSC). The active site involves Asp111. Catalysis depends on Cys114, which acts as the Nucleophile. Residues 167–177 (IRREETWGGAI) are variable-loop. The his-loop stretch occupies residues 217–221 (YDGIH). Residue Ile220 coordinates substrate. His221 is an active-site residue. Residues 245 to 250 (DVVLAQ) form an S2 site region. The C2H2-type zinc finger occupies 272–296 (LRCMVCQKGLTGQVEAREHAKETGH). His296 is a catalytic residue.

It localises to the cytoplasm. The catalysed reaction is Thiol-dependent hydrolysis of ester, thioester, amide, peptide and isopeptide bonds formed by the C-terminal Gly of ubiquitin (a 76-residue protein attached to proteins as an intracellular targeting signal).. Hydrolase that can remove conjugated ubiquitin from proteins and participates in endoplasmic reticulum-associated degradation (ERAD) for misfolded lumenal proteins. May act by triming the ubiquitin chain on the associated substrate to facilitate their threading through the VCP/p97 pore. Ubiquitin moieties on substrates may present a steric impediment to the threading process when the substrate is transferred to the VCP pore and threaded through VCP's axial channel. Mediates deubiquitination of 'Lys-27'-, 'Lys-29'- and 'Lys-33'-linked polyubiquitin chains. Also able to hydrolyze 'Lys-11'-linked ubiquitin chains. Cleaves both polyubiquitin and di-ubiquitin. The sequence is that of Ubiquitin thioesterase OTU1 (YOD1) from Gallus gallus (Chicken).